Here is a 365-residue protein sequence, read N- to C-terminus: MVRPVFDAAVLSGRSDIPSQFIWPEGESPTPDAAEELHVPLINIGGMLSGDAAAAAEVTRLVGEACERHGFFQVVNHGIDAELLADAHRCVDNFFTMPLPEKQRALRRPGESCGYASSFTGRFASKLPWKETLSFRSCPSDPALVVDYIVATLGEDHRRLGEVYARYCSEMSRLSLEIMEVLGESLGVGRAHYRRFFEGNDSIMRLNYYPPCQRPLETLGTGPHCDPTSLTILHQDNVGGLQVHTEGRWRSIRPRADAFVVNIGDTFMALSNGRYKSCLHRAVVNSRVPRKSLAFFLCPEMDKVVAPPGTLVDASNPRAYPDFTWRSLLDFTQKHYRADMKTLEVFSSWIVQQQQGQLALQPAMT.

Positions 199 to 299 constitute a Fe2OG dioxygenase domain; the sequence is GNDSIMRLNY…RKSLAFFLCP (101 aa). Fe cation-binding residues include His-224, Asp-226, and His-280. Arg-290 is a catalytic residue.

It belongs to the iron/ascorbate-dependent oxidoreductase family. GA20OX subfamily. Requires Fe cation as cofactor. The cofactor is L-ascorbate. As to expression, expressed in nodes and the ear of the elongating stem.

It catalyses the reaction gibberellin A12 + 2 2-oxoglutarate + 3 O2 + H(+) = gibberellin A9 + 2 succinate + 3 CO2 + 2 H2O. It carries out the reaction gibberellin A53 + 2 2-oxoglutarate + 3 O2 + H(+) = gibberellin A20 + 2 succinate + 3 CO2 + 2 H2O. In terms of biological role, key oxidase enzyme in the biosynthesis of gibberellin that catalyzes the conversion of GA12 and GA53 to GA9 and GA20 respectively, via a three-step oxidation at C-20 of the GA skeleton. This chain is Gibberellin 20 oxidase 1-A (GA20ox1A), found in Triticum aestivum (Wheat).